The following is a 200-amino-acid chain: Holliday junction branch migration complex subunit RuvA (200 aa).

The interval 1-64 is domain I; the sequence is MYAYFRGELI…EDLMQLYGFI (64 aa). Positions 65-143 are domain II; the sequence is EEEERQLFLL…KLQQTRPGKT (79 aa). The tract at residues 144–154 is flexible linker; the sequence is AGAGSVASLSE. A domain III region spans residues 154 to 200; sequence EDALQALMTLGFSRASAQQAVTRALLSAENPGVEDIVREALQNIRNH.

It belongs to the RuvA family. As to quaternary structure, homotetramer. Forms an RuvA(8)-RuvB(12)-Holliday junction (HJ) complex. HJ DNA is sandwiched between 2 RuvA tetramers; dsDNA enters through RuvA and exits via RuvB. An RuvB hexamer assembles on each DNA strand where it exits the tetramer. Each RuvB hexamer is contacted by two RuvA subunits (via domain III) on 2 adjacent RuvB subunits; this complex drives branch migration. In the full resolvosome a probable DNA-RuvA(4)-RuvB(12)-RuvC(2) complex forms which resolves the HJ.

The protein resides in the cytoplasm. In terms of biological role, the RuvA-RuvB-RuvC complex processes Holliday junction (HJ) DNA during genetic recombination and DNA repair, while the RuvA-RuvB complex plays an important role in the rescue of blocked DNA replication forks via replication fork reversal (RFR). RuvA specifically binds to HJ cruciform DNA, conferring on it an open structure. The RuvB hexamer acts as an ATP-dependent pump, pulling dsDNA into and through the RuvAB complex. HJ branch migration allows RuvC to scan DNA until it finds its consensus sequence, where it cleaves and resolves the cruciform DNA. This chain is Holliday junction branch migration complex subunit RuvA, found in Prosthecochloris aestuarii (strain DSM 271 / SK 413).